The chain runs to 287 residues: Phosphatidylserine decarboxylase proenzyme (287 aa).

Residues aspartate 89, histidine 146, and serine 252 each act as charge relay system; for autoendoproteolytic cleavage activity in the active site. The active-site Schiff-base intermediate with substrate; via pyruvic acid; for decarboxylase activity is serine 252. The residue at position 252 (serine 252) is a Pyruvic acid (Ser); by autocatalysis.

This sequence belongs to the phosphatidylserine decarboxylase family. PSD-B subfamily. Prokaryotic type I sub-subfamily. As to quaternary structure, heterodimer of a large membrane-associated beta subunit and a small pyruvoyl-containing alpha subunit. Pyruvate is required as a cofactor. Is synthesized initially as an inactive proenzyme. Formation of the active enzyme involves a self-maturation process in which the active site pyruvoyl group is generated from an internal serine residue via an autocatalytic post-translational modification. Two non-identical subunits are generated from the proenzyme in this reaction, and the pyruvate is formed at the N-terminus of the alpha chain, which is derived from the carboxyl end of the proenzyme. The autoendoproteolytic cleavage occurs by a canonical serine protease mechanism, in which the side chain hydroxyl group of the serine supplies its oxygen atom to form the C-terminus of the beta chain, while the remainder of the serine residue undergoes an oxidative deamination to produce ammonia and the pyruvoyl prosthetic group on the alpha chain. During this reaction, the Ser that is part of the protease active site of the proenzyme becomes the pyruvoyl prosthetic group, which constitutes an essential element of the active site of the mature decarboxylase.

The protein localises to the cell membrane. The enzyme catalyses a 1,2-diacyl-sn-glycero-3-phospho-L-serine + H(+) = a 1,2-diacyl-sn-glycero-3-phosphoethanolamine + CO2. It functions in the pathway phospholipid metabolism; phosphatidylethanolamine biosynthesis; phosphatidylethanolamine from CDP-diacylglycerol: step 2/2. Catalyzes the formation of phosphatidylethanolamine (PtdEtn) from phosphatidylserine (PtdSer). The chain is Phosphatidylserine decarboxylase proenzyme from Shewanella amazonensis (strain ATCC BAA-1098 / SB2B).